A 243-amino-acid chain; its full sequence is Probable transcriptional regulatory protein TTE1135 (243 aa).

It belongs to the TACO1 family.

Its subcellular location is the cytoplasm. This is Probable transcriptional regulatory protein TTE1135 from Caldanaerobacter subterraneus subsp. tengcongensis (strain DSM 15242 / JCM 11007 / NBRC 100824 / MB4) (Thermoanaerobacter tengcongensis).